Reading from the N-terminus, the 654-residue chain is Protein fem-1 homolog A (654 aa).

7 ANK repeats span residues 2 to 31 (DLHT…REEI), 40 to 70 (GGGT…SVEA), 82 to 111 (EGAP…SVNR), 115 to 145 (TNST…DLEV), 149 to 178 (HGHT…QVNR), 182 to 211 (KGNT…RMER), and 214 to 243 (YGMT…GHGQ). The residue at position 108 (S108) is a Phosphoserine. The tract at residues 241-265 (HGQLSGTELPGEGSSQMAGNHCSTP) is disordered. Polar residues predominate over residues 253–263 (GSSQMAGNHCS). 2 TPR repeats span residues 283-317 (VEAL…RHQG) and 375-408 (SYYI…QQNN). ANK repeat units follow at residues 519–561 (NGFT…DPDS) and 565–594 (DNNT…HMDA). Residue S608 is modified to Phosphoserine.

The protein belongs to the fem-1 family. As to quaternary structure, component of a CRL2 E3 ubiquitin-protein ligase complex, also named ECS (Elongin BC-CUL2/5-SOCS-box protein) complex, composed of CUL2, Elongin BC (ELOB and ELOC), RBX1 and substrate-specific adapter FEM1A. Interacts with PTGER4. Interacts with NFKB1; the interaction is direct. Post-translationally, phosphorylated; highly phosphorylated in myoblasts and myotubes. Phosphorylation at Ser-108 and Ser-608 promote PGE2-EP4-mediated inhibition of inflammation. Dephosphorylated by protein phosphatase 2A (PP2A).

The protein resides in the mitochondrion. The protein localises to the cytoplasm. It functions in the pathway protein modification; protein ubiquitination. Functionally, substrate-recognition component of a Cul2-RING (CRL2) E3 ubiquitin-protein ligase complex of the DesCEND (destruction via C-end degrons) pathway, which recognizes a C-degron located at the extreme C terminus of target proteins, leading to their ubiquitination and degradation. The C-degron recognized by the DesCEND pathway is usually a motif of less than ten residues and can be present in full-length proteins, truncated proteins or proteolytically cleaved forms. The CRL2(FEM1A) complex specifically recognizes proteins with an arginine at the C-terminus: recognizes and binds proteins ending with -Lys/Arg-Xaa-Arg and -Lys/Arg-Xaa-Xaa-Arg C-degrons, such as SIL1 or OR51B2, leading to their ubiquitination and degradation. Involved in PGE2-EP4-mediated inhibition of inflammation of macrophages via interaction with NFKB1 and PTGER4. Promotes inflammation in brain microglia through MAP2K4/MKK4-mediated signaling. The protein is Protein fem-1 homolog A of Rattus norvegicus (Rat).